The sequence spans 333 residues: 6-phosphogluconolactonase (333 aa).

It belongs to the cycloisomerase 2 family.

It catalyses the reaction 6-phospho-D-glucono-1,5-lactone + H2O = 6-phospho-D-gluconate + H(+). The protein operates within carbohydrate degradation; pentose phosphate pathway; D-ribulose 5-phosphate from D-glucose 6-phosphate (oxidative stage): step 2/3. Functionally, catalyzes the hydrolysis of 6-phosphogluconolactone to 6-phosphogluconate. The protein is 6-phosphogluconolactonase of Buchnera aphidicola subsp. Schizaphis graminum (strain Sg).